An 821-amino-acid polypeptide reads, in one-letter code: Calpain-3 (821 aa).

Positions 1 to 34 are disordered; it reads MPTVISASMAPRTGASQVPRTMPQAAQGKGTEAG. The 345-residue stretch at 73 to 417 folds into the Calpain catalytic domain; the sequence is LYLDPEFPPD…FTKLEICNLT (345 aa). Residues Cys-128, His-334, and Asn-358 contribute to the active site. The segment at 418 to 586 is domain III; it reads ADALESDKLQ…KRNLSEEVEN (169 aa). The interval 587 to 649 is linker; the sequence is TISVDRPVRK…EPSNTDQESE (63 aa). The interval 603–652 is disordered; the sequence is IFVSDRANSNKELGVDQESEEGQDKTSPDKQEKSPKPEPSNTDQESEEQQ. Over residues 624–638 the composition is skewed to basic and acidic residues; that stretch reads GQDKTSPDKQEKSPK. Residues 641–652 show a composition bias toward polar residues; it reads PSNTDQESEEQQ. 4 consecutive EF-hand domains span residues 649–683, 692–725, 722–757, and 787–821; these read EEQQQFRNIFRQIAGDDMEICADELKNVLNRVVNK, FTLESCRSMIALMDTDGSGRLNLQEFHHLWKKIK, KKIKSWQKIFKHYDTDQSGTINSYEMRNAVNDAGFH, and VRLEGMFRAFNAFDKDGDGIIKLNVLEWLQLTMYA. The segment at 650-821 is domain IV; sequence EQQQFRNIFR…LEWLQLTMYA (172 aa). The Ca(2+) site is built by Ala-662, Asp-665, Glu-667, Glu-672, Asp-705, Asp-707, Ser-709, Arg-711, Glu-716, Asp-735, Asp-737, Ser-739, Thr-741, Glu-746, Asp-800, Asp-802, Asp-804, and Ile-806.

It belongs to the peptidase C2 family. Homodimer; via EF-hand domain 4. Interacts with TTN/titin. Interacts with CMYA5; this interaction, which results in CMYA5 proteolysis, may protect CAPN3 from autolysis. Interacts with SIMC1. Interacts with UTP25; the interaction is required for CAPN3 translocation to the nucleolus. In terms of tissue distribution, skeletal muscle.

The protein resides in the cytoplasm. It localises to the nucleus. The protein localises to the nucleolus. It catalyses the reaction Broad endopeptidase activity.. Its activity is regulated as follows. Activated by micromolar concentrations of calcium and inhibited by calpastatin. In terms of biological role, calcium-regulated non-lysosomal thiol-protease. Proteolytically cleaves CTBP1. Mediates, with UTP25, the proteasome-independent degradation of p53/TP53. The sequence is that of Calpain-3 (CAPN3) from Sus scrofa (Pig).